The sequence spans 175 residues: uncharacterized protein (175 aa).

Residues 1-11 (METWRKGSFRN) constitute a mitochondrion transit peptide. Residues 24–92 (RRLRRQSSVL…PRLYRESSSC (69 aa)) form a disordered region. The span at 41–63 (GDHEEYSNREVIRELQGRPDGRR) shows a compositional bias: basic and acidic residues.

It localises to the mitochondrion. This is an uncharacterized protein from Homo sapiens (Human).